Reading from the N-terminus, the 668-residue chain is Biotin biosynthesis bifunctional protein BioWF (668 aa).

Residue Arg293 participates in substrate binding. 380–381 provides a ligand contact to pyridoxal 5'-phosphate; it reads GY. His405 contributes to the substrate binding site. Pyridoxal 5'-phosphate-binding positions include Ser451, 476–479, and 507–510; these read DDAH and TASK. Lys510 is modified (N6-(pyridoxal phosphate)lysine).

The protein in the N-terminal section; belongs to the BioW family. It in the C-terminal section; belongs to the class-II pyridoxal-phosphate-dependent aminotransferase family. BioF subfamily. In terms of assembly, homodimer. Requires Mg(2+) as cofactor. Pyridoxal 5'-phosphate serves as cofactor.

It catalyses the reaction heptanedioate + ATP + CoA = 6-carboxyhexanoyl-CoA + AMP + diphosphate. The enzyme catalyses 6-carboxyhexanoyl-[ACP] + L-alanine + H(+) = (8S)-8-amino-7-oxononanoate + holo-[ACP] + CO2. It functions in the pathway metabolic intermediate metabolism; pimeloyl-CoA biosynthesis; pimeloyl-CoA from pimelate: step 1/1. It participates in cofactor biosynthesis; biotin biosynthesis. Functionally, catalyzes both the decarboxylative condensation of pimeloyl-[acyl-carrier protein] and L-alanine to produce 8-amino-7-oxononanoate (AON), [acyl-carrier protein], and carbon dioxide, and the transformation of pimelate into pimeloyl-CoA with concomitant hydrolysis of ATP to AMP. The polypeptide is Biotin biosynthesis bifunctional protein BioWF (Cutibacterium acnes (strain SK137) (Propionibacterium acnes)).